The following is a 284-amino-acid chain: Release factor glutamine methyltransferase (284 aa).

Residues 123-127, aspartate 146, tryptophan 174, and asparagine 189 contribute to the S-adenosyl-L-methionine site; that span reads GTGTG. 189-192 lines the substrate pocket; the sequence is NPPY.

The protein belongs to the protein N5-glutamine methyltransferase family. PrmC subfamily.

It catalyses the reaction L-glutaminyl-[peptide chain release factor] + S-adenosyl-L-methionine = N(5)-methyl-L-glutaminyl-[peptide chain release factor] + S-adenosyl-L-homocysteine + H(+). Its function is as follows. Methylates the class 1 translation termination release factors RF1/PrfA and RF2/PrfB on the glutamine residue of the universally conserved GGQ motif. The chain is Release factor glutamine methyltransferase from Francisella tularensis subsp. tularensis (strain SCHU S4 / Schu 4).